Reading from the N-terminus, the 161-residue chain is 2-C-methyl-D-erythritol 2,4-cyclodiphosphate synthase (161 aa).

D11 and H13 together coordinate a divalent metal cation. 4-CDP-2-C-methyl-D-erythritol 2-phosphate contacts are provided by residues 11-13 (DIH) and 37-38 (HS). An a divalent metal cation-binding site is contributed by H45. 4-CDP-2-C-methyl-D-erythritol 2-phosphate contacts are provided by residues 59–61 (DIG) and 135–138 (TTNE).

Belongs to the IspF family. As to quaternary structure, homotrimer. A divalent metal cation is required as a cofactor.

The enzyme catalyses 4-CDP-2-C-methyl-D-erythritol 2-phosphate = 2-C-methyl-D-erythritol 2,4-cyclic diphosphate + CMP. The protein operates within isoprenoid biosynthesis; isopentenyl diphosphate biosynthesis via DXP pathway; isopentenyl diphosphate from 1-deoxy-D-xylulose 5-phosphate: step 4/6. Involved in the biosynthesis of isopentenyl diphosphate (IPP) and dimethylallyl diphosphate (DMAPP), two major building blocks of isoprenoid compounds. Catalyzes the conversion of 4-diphosphocytidyl-2-C-methyl-D-erythritol 2-phosphate (CDP-ME2P) to 2-C-methyl-D-erythritol 2,4-cyclodiphosphate (ME-CPP) with a corresponding release of cytidine 5-monophosphate (CMP). The protein is 2-C-methyl-D-erythritol 2,4-cyclodiphosphate synthase of Acaryochloris marina (strain MBIC 11017).